A 331-amino-acid chain; its full sequence is Cytosolic arginine sensor for mTORC1 subunit 1 (331 aa).

Position 14 is a phosphoserine (Ser14). In terms of domain architecture, ACT 1 spans 72–139 (AEATWLVMNV…SVVIHTLARE (68 aa)). Residue 110–111 (SV) participates in L-arginine binding. The disordered stretch occupies residues 155-174 (GDDSSNGFPQAQHGPSPTVH). The segment covering 156–174 (DDSSNGFPQAQHGPSPTVH) has biased composition (polar residues). Residues 262–322 (WRMVRIGGQP…SCVIDILQRR (61 aa)) enclose the ACT 2 domain. L-arginine contacts are provided by residues Gly273, 279-280 (IV), and 299-303 (TFNFD).

It belongs to the GATS family. In terms of assembly, forms homodimers and heterodimers with CASTOR2. Interacts with the GATOR2 complex which is composed of MIOS, SEC13, SEH1L, WDR24 and WDR59; the interaction is negatively regulated by arginine. Interacts with TM4SF5; the interaction is positively regulated by leucine and is negatively regulated by arginine. Post-translationally, phosphorylation at Ser-14 by AKT1, promoting the interaction between CASTOR1 and RNF167. Ubiquitinated by RNF167 via 'Lys-29'-polyubiquitination, leading to its degradation, releasing the GATOR2 complex. Ubiquitination by RNF167 is promoted by phosphorylation at Ser-14 by AKT1.

The protein resides in the cytoplasm. Its subcellular location is the cytosol. Functions as an intracellular arginine sensor within the amino acid-sensing branch of the TORC1 signaling pathway. As a homodimer or a heterodimer with CASTOR2, binds and inhibits the GATOR subcomplex GATOR2 and thereby mTORC1. Binding of arginine to CASTOR1 allosterically disrupts the interaction of CASTOR1-containing dimers with GATOR2 which can in turn activate mTORC1 and the TORC1 signaling pathway. In Rattus norvegicus (Rat), this protein is Cytosolic arginine sensor for mTORC1 subunit 1.